A 419-amino-acid chain; its full sequence is Tryptophan synthase beta chain (419 aa).

Position 98 is an N6-(pyridoxal phosphate)lysine (Lys-98).

This sequence belongs to the TrpB family. In terms of assembly, tetramer of two alpha and two beta chains. Requires pyridoxal 5'-phosphate as cofactor.

It carries out the reaction (1S,2R)-1-C-(indol-3-yl)glycerol 3-phosphate + L-serine = D-glyceraldehyde 3-phosphate + L-tryptophan + H2O. The protein operates within amino-acid biosynthesis; L-tryptophan biosynthesis; L-tryptophan from chorismate: step 5/5. In terms of biological role, the beta subunit is responsible for the synthesis of L-tryptophan from indole and L-serine. This is Tryptophan synthase beta chain from Ruegeria sp. (strain TM1040) (Silicibacter sp.).